The following is a 319-amino-acid chain: Acetyl-coenzyme A carboxylase carboxyl transferase subunit alpha (319 aa).

The CoA carboxyltransferase C-terminal domain maps to 35 to 296 (NLDEEVQRLR…KAQLLDDLSE (262 aa)).

It belongs to the AccA family. In terms of assembly, acetyl-CoA carboxylase is a heterohexamer composed of biotin carboxyl carrier protein (AccB), biotin carboxylase (AccC) and two subunits each of ACCase subunit alpha (AccA) and ACCase subunit beta (AccD).

The protein resides in the cytoplasm. The catalysed reaction is N(6)-carboxybiotinyl-L-lysyl-[protein] + acetyl-CoA = N(6)-biotinyl-L-lysyl-[protein] + malonyl-CoA. It functions in the pathway lipid metabolism; malonyl-CoA biosynthesis; malonyl-CoA from acetyl-CoA: step 1/1. In terms of biological role, component of the acetyl coenzyme A carboxylase (ACC) complex. First, biotin carboxylase catalyzes the carboxylation of biotin on its carrier protein (BCCP) and then the CO(2) group is transferred by the carboxyltransferase to acetyl-CoA to form malonyl-CoA. The protein is Acetyl-coenzyme A carboxylase carboxyl transferase subunit alpha of Sodalis glossinidius (strain morsitans).